A 202-amino-acid polypeptide reads, in one-letter code: Orotate phosphoribosyltransferase (202 aa).

5-phospho-alpha-D-ribose 1-diphosphate-binding positions include Lys93 and 113 to 121 (EDIITTGGS). Orotate contacts are provided by Thr117 and Arg145.

The protein belongs to the purine/pyrimidine phosphoribosyltransferase family. PyrE subfamily. As to quaternary structure, homodimer. The cofactor is Mg(2+).

The enzyme catalyses orotidine 5'-phosphate + diphosphate = orotate + 5-phospho-alpha-D-ribose 1-diphosphate. It participates in pyrimidine metabolism; UMP biosynthesis via de novo pathway; UMP from orotate: step 1/2. Its function is as follows. Catalyzes the transfer of a ribosyl phosphate group from 5-phosphoribose 1-diphosphate to orotate, leading to the formation of orotidine monophosphate (OMP). This is Orotate phosphoribosyltransferase from Campylobacter concisus (strain 13826).